Here is a 314-residue protein sequence, read N- to C-terminus: Taste receptor type 2 member 42 (314 aa).

Over 1-7 (MATEMDK) the chain is Extracellular. Residues 8 to 28 (IFLTLATVEFIIGMLGNVFIG) form a helical membrane-spanning segment. Over 29-50 (LVNCSEGIKNQKVFSVDFILTC) the chain is Cytoplasmic. Residues 51–71 (LAISTIGHLLVILFDSCVVGL) form a helical membrane-spanning segment. Over 72–101 (APHLYATDRVRRPVTMLWHMXNHLTTWLAT) the chain is Extracellular. Residues 102-122 (CLSIFYFFKIAHFPHSLFLWL) form a helical membrane-spanning segment. Topologically, residues 123–127 (RWRMN) are cytoplasmic. Residues 128–148 (RVIAILLTLSLFLLIFDCLVL) form a helical membrane-spanning segment. The Extracellular segment spans residues 149-187 (EMFIDXSLNIIDKSNLTLYLDESKTPYDKLSLLKILLSL). Residue asparagine 163 is glycosylated (N-linked (GlcNAc...) asparagine). Residues 188–208 (NSFIPFSLCLTSLLFLFLSLV) form a helical membrane-spanning segment. At 209 to 238 (RHTRNLKLSSLGSRDSSTEAHRRAMKMVMS) the chain is on the cytoplasmic side. The chain crosses the membrane as a helical span at residues 239-259 (LLFLFIVHFFSLQVANWTFCI). The Extracellular portion of the chain corresponds to 260–265 (LGNNKY). The chain crosses the membrane as a helical span at residues 266–286 (TQFVTLALHAFPSCHSFILIL). Residues 287-314 (GNSKLRQTAVRLLWHLRNYTKRPNPLPL) are Cytoplasmic-facing.

Belongs to the G-protein coupled receptor T2R family.

Its subcellular location is the membrane. Its function is as follows. Receptor that may play a role in the perception of bitterness and is gustducin-linked. May play a role in sensing the chemical composition of the gastrointestinal content. The activity of this receptor may stimulate alpha gustducin, mediate PLC-beta-2 activation and lead to the gating of TRPM5. This is Taste receptor type 2 member 42 (TAS2R42) from Macaca mulatta (Rhesus macaque).